The chain runs to 201 residues: Arachin 25 kDa protein (201 aa).

This is one of six apparently different protein chains that constitute the peanut protein arachin.

The polypeptide is Arachin 25 kDa protein (Arachis hypogaea (Peanut)).